Here is a 99-residue protein sequence, read N- to C-terminus: Large ribosomal subunit protein bL27 (99 aa).

The propeptide occupies 1–9 (MLLMNLQLF).

It belongs to the bacterial ribosomal protein bL27 family. Post-translationally, the N-terminus is cleaved by ribosomal processing cysteine protease Prp.

In Clostridium novyi (strain NT), this protein is Large ribosomal subunit protein bL27.